A 77-amino-acid chain; its full sequence is RNA-binding protein Hfq (77 aa).

The region spanning D10–I70 is the Sm domain.

It belongs to the Hfq family. In terms of assembly, homohexamer.

In terms of biological role, RNA chaperone that binds small regulatory RNA (sRNAs) and mRNAs to facilitate mRNA translational regulation in response to envelope stress, environmental stress and changes in metabolite concentrations. Also binds with high specificity to tRNAs. The protein is RNA-binding protein Hfq of Cereibacter sphaeroides (strain ATCC 17029 / ATH 2.4.9) (Rhodobacter sphaeroides).